A 340-amino-acid polypeptide reads, in one-letter code: Arginase 1, mitochondrial (340 aa).

A mitochondrion-targeting transit peptide spans 1 to 24 (MGGVAAGTRWIHHVRRLSAAKVST). Residues histidine 159, aspartate 183, histidine 185, and aspartate 187 each coordinate Mn(2+). Substrate is bound by residues 185-189 (HPDIY) and 193-195 (EGN). 2 residues coordinate Mn(2+): aspartate 268 and aspartate 270. Residue glutamate 311 participates in substrate binding.

This sequence belongs to the arginase family. Mn(2+) is required as a cofactor.

The protein localises to the mitochondrion. It carries out the reaction L-arginine + H2O = urea + L-ornithine. It participates in nitrogen metabolism; urea cycle; L-ornithine and urea from L-arginine: step 1/1. Functionally, catalyzes the hydrolysis of L-arginine to urea and L-ornithine. The latter can be utilized in the urea cycle or as a precursor for the synthesis of both polyamines and proline. This chain is Arginase 1, mitochondrial, found in Oryza sativa subsp. indica (Rice).